Consider the following 171-residue polypeptide: Peptide deformylase (171 aa).

Fe cation contacts are provided by Cys94 and His136. Residue Glu137 is part of the active site. Residue His140 coordinates Fe cation.

Belongs to the polypeptide deformylase family. It depends on Fe(2+) as a cofactor.

It carries out the reaction N-terminal N-formyl-L-methionyl-[peptide] + H2O = N-terminal L-methionyl-[peptide] + formate. Removes the formyl group from the N-terminal Met of newly synthesized proteins. Requires at least a dipeptide for an efficient rate of reaction. N-terminal L-methionine is a prerequisite for activity but the enzyme has broad specificity at other positions. This Afipia carboxidovorans (strain ATCC 49405 / DSM 1227 / KCTC 32145 / OM5) (Oligotropha carboxidovorans) protein is Peptide deformylase.